Reading from the N-terminus, the 200-residue chain is Recombination protein RecR (200 aa).

The C4-type zinc-finger motif lies at 59–74 (CSTCGSLDTQDPCAIC). Residues 82-177 (SLICVVEEVG…TVSMLARGVP (96 aa)) enclose the Toprim domain.

Belongs to the RecR family.

Its function is as follows. May play a role in DNA repair. It seems to be involved in an RecBC-independent recombinational process of DNA repair. It may act with RecF and RecO. The polypeptide is Recombination protein RecR (Phenylobacterium zucineum (strain HLK1)).